We begin with the raw amino-acid sequence, 406 residues long: Imidazolonepropionase (406 aa).

Fe(3+) is bound by residues His72 and His74. Residues His72 and His74 each coordinate Zn(2+). Residues Arg81, Tyr144, and His177 each coordinate 4-imidazolone-5-propanoate. Residue Tyr144 coordinates N-formimidoyl-L-glutamate. His242 is a Fe(3+) binding site. Position 242 (His242) interacts with Zn(2+). Gln245 contributes to the 4-imidazolone-5-propanoate binding site. Fe(3+) is bound at residue Asp317. A Zn(2+)-binding site is contributed by Asp317. N-formimidoyl-L-glutamate contacts are provided by Asn319 and Gly321. Residue Thr322 participates in 4-imidazolone-5-propanoate binding.

The protein belongs to the metallo-dependent hydrolases superfamily. HutI family. It depends on Zn(2+) as a cofactor. Fe(3+) serves as cofactor.

It localises to the cytoplasm. The enzyme catalyses 4-imidazolone-5-propanoate + H2O = N-formimidoyl-L-glutamate. The protein operates within amino-acid degradation; L-histidine degradation into L-glutamate; N-formimidoyl-L-glutamate from L-histidine: step 3/3. Catalyzes the hydrolytic cleavage of the carbon-nitrogen bond in imidazolone-5-propanoate to yield N-formimidoyl-L-glutamate. It is the third step in the universal histidine degradation pathway. The chain is Imidazolonepropionase from Yersinia pestis bv. Antiqua (strain Antiqua).